A 108-amino-acid polypeptide reads, in one-letter code: Putative septation protein SpoVG (108 aa).

Belongs to the SpoVG family.

In terms of biological role, could be involved in septation. This chain is Putative septation protein SpoVG, found in Bdellovibrio bacteriovorus (strain ATCC 15356 / DSM 50701 / NCIMB 9529 / HD100).